The following is a 326-amino-acid chain: Glycerol-3-phosphate dehydrogenase [NAD(P)+] (326 aa).

NADPH-binding residues include tryptophan 13, arginine 33, and lysine 107. 3 residues coordinate sn-glycerol 3-phosphate: lysine 107, glycine 135, and serine 137. Residue alanine 139 coordinates NADPH. Positions 190, 243, 253, 254, and 255 each coordinate sn-glycerol 3-phosphate. Lysine 190 serves as the catalytic Proton acceptor. Residue arginine 254 participates in NADPH binding. Residues leucine 273 and glutamate 275 each contribute to the NADPH site.

This sequence belongs to the NAD-dependent glycerol-3-phosphate dehydrogenase family.

It is found in the cytoplasm. The enzyme catalyses sn-glycerol 3-phosphate + NAD(+) = dihydroxyacetone phosphate + NADH + H(+). It catalyses the reaction sn-glycerol 3-phosphate + NADP(+) = dihydroxyacetone phosphate + NADPH + H(+). It functions in the pathway membrane lipid metabolism; glycerophospholipid metabolism. Catalyzes the reduction of the glycolytic intermediate dihydroxyacetone phosphate (DHAP) to sn-glycerol 3-phosphate (G3P), the key precursor for phospholipid synthesis. In Brucella abortus (strain 2308), this protein is Glycerol-3-phosphate dehydrogenase [NAD(P)+].